The following is a 203-amino-acid chain: Ribosomal RNA small subunit methyltransferase G (203 aa).

Residues Gly-73, Leu-78, 124–125 (VE), and Arg-139 each bind S-adenosyl-L-methionine.

The protein belongs to the methyltransferase superfamily. RNA methyltransferase RsmG family.

It is found in the cytoplasm. The catalysed reaction is guanosine(527) in 16S rRNA + S-adenosyl-L-methionine = N(7)-methylguanosine(527) in 16S rRNA + S-adenosyl-L-homocysteine. Functionally, specifically methylates the N7 position of guanine in position 527 of 16S rRNA. The protein is Ribosomal RNA small subunit methyltransferase G of Haemophilus influenzae (strain PittEE).